The sequence spans 447 residues: N-succinylarginine dihydrolase (447 aa).

Residues 21–30 (AGLAHGNVAS), asparagine 112, and 139–140 (HR) contribute to the substrate site. Residue glutamate 176 is part of the active site. Arginine 215 provides a ligand contact to substrate. Residue histidine 251 is part of the active site. Substrate-binding residues include aspartate 253 and asparagine 364. The active-site Nucleophile is the cysteine 370.

This sequence belongs to the succinylarginine dihydrolase family. Homodimer.

It catalyses the reaction N(2)-succinyl-L-arginine + 2 H2O + 2 H(+) = N(2)-succinyl-L-ornithine + 2 NH4(+) + CO2. It functions in the pathway amino-acid degradation; L-arginine degradation via AST pathway; L-glutamate and succinate from L-arginine: step 2/5. Its function is as follows. Catalyzes the hydrolysis of N(2)-succinylarginine into N(2)-succinylornithine, ammonia and CO(2). The sequence is that of N-succinylarginine dihydrolase from Chromohalobacter salexigens (strain ATCC BAA-138 / DSM 3043 / CIP 106854 / NCIMB 13768 / 1H11).